Consider the following 250-residue polypeptide: tRNA (guanine-N(1)-)-methyltransferase (250 aa).

S-adenosyl-L-methionine contacts are provided by residues Gly-116 and 136–141 (IGDYVL).

This sequence belongs to the RNA methyltransferase TrmD family. Homodimer.

It is found in the cytoplasm. The enzyme catalyses guanosine(37) in tRNA + S-adenosyl-L-methionine = N(1)-methylguanosine(37) in tRNA + S-adenosyl-L-homocysteine + H(+). Specifically methylates guanosine-37 in various tRNAs. In Pseudomonas putida (strain ATCC 700007 / DSM 6899 / JCM 31910 / BCRC 17059 / LMG 24140 / F1), this protein is tRNA (guanine-N(1)-)-methyltransferase.